The chain runs to 217 residues: Nascent polypeptide-associated complex subunit alpha-like protein 2 (217 aa).

The tract at residues 1 to 81 (MSPPPAVVTE…SEKKSRKAML (81 aa)) is disordered. Residues 37–60 (PIVEDVKDDEDDDDDDEEEEDDDA) show a composition bias toward acidic residues. In terms of domain architecture, NAC-A/B spans 70 to 135 (SRSEKKSRKA…AKIEDLSSQL (66 aa)). The UBA domain occupies 178–215 (VEARDIDLVMTQAGVSRSKAVKALKSHDGDIVSAIMEL).

The protein belongs to the NAC-alpha family.

Functionally, may promote appropriate targeting of ribosome-nascent polypeptide complexes. The protein is Nascent polypeptide-associated complex subunit alpha-like protein 2 of Arabidopsis thaliana (Mouse-ear cress).